A 132-amino-acid chain; its full sequence is Fatty acid-binding protein 12 (132 aa).

A fatty acid-binding positions include Arg-107 and 127 to 129 (RTY).

It belongs to the calycin superfamily. Fatty-acid binding protein (FABP) family. As to expression, highly expressed in adult retina and testis.

In terms of biological role, may play a role in lipid transport. The polypeptide is Fatty acid-binding protein 12 (Fabp12) (Mus musculus (Mouse)).